A 35-amino-acid polypeptide reads, in one-letter code: Peptide Hact-3 (35 aa).

In terms of tissue distribution, expressed in tentacles.

The protein resides in the nematocyst. It is found in the secreted. Its function is as follows. Peptide with unknown function. Does not exhibit antimicrobial activity against Escherichia coli and Staphylococcus aureus. The polypeptide is Peptide Hact-3 (Heliofungia actiniformis (Mushroom coral)).